Consider the following 510-residue polypeptide: GTPase Der (510 aa).

EngA-type G domains lie at 4-168 and 222-395; these read PVVA…AEKM and IKIA…ACAT. Residues 10–17, 57–61, 120–123, 228–235, 275–279, and 340–343 each bind GTP; these read GRPNVGKS, DTGGI, NKTD, DTAGV, and NKWD. In terms of domain architecture, KH-like spans 396-480; the sequence is QKMTTSMLTR…PIRLLFQEGN (85 aa).

This sequence belongs to the TRAFAC class TrmE-Era-EngA-EngB-Septin-like GTPase superfamily. EngA (Der) GTPase family. Associates with the 50S ribosomal subunit.

Its function is as follows. GTPase that plays an essential role in the late steps of ribosome biogenesis. The chain is GTPase Der from Pasteurella multocida (strain Pm70).